Here is a 180-residue protein sequence, read N- to C-terminus: Shikimate kinase (180 aa).

G14 to C19 contributes to the ATP binding site. Mg(2+) is bound at residue S18. Residues D36, R60, and G82 each contribute to the substrate site. Residue R120 participates in ATP binding. Residue R139 coordinates substrate.

This sequence belongs to the shikimate kinase family. In terms of assembly, monomer. Mg(2+) serves as cofactor.

It localises to the cytoplasm. It catalyses the reaction shikimate + ATP = 3-phosphoshikimate + ADP + H(+). It functions in the pathway metabolic intermediate biosynthesis; chorismate biosynthesis; chorismate from D-erythrose 4-phosphate and phosphoenolpyruvate: step 5/7. Its function is as follows. Catalyzes the specific phosphorylation of the 3-hydroxyl group of shikimic acid using ATP as a cosubstrate. In Xanthomonas axonopodis pv. citri (strain 306), this protein is Shikimate kinase.